Reading from the N-terminus, the 259-residue chain is NAD kinase (259 aa).

The active-site Proton acceptor is the Asp-43. Residues 43–44, 111–112, and Arg-136 each bind NAD(+); these read DG and NE.

It belongs to the NAD kinase family. It depends on a divalent metal cation as a cofactor.

Its subcellular location is the cytoplasm. The catalysed reaction is NAD(+) + ATP = ADP + NADP(+) + H(+). Functionally, involved in the regulation of the intracellular balance of NAD and NADP, and is a key enzyme in the biosynthesis of NADP. Catalyzes specifically the phosphorylation on 2'-hydroxyl of the adenosine moiety of NAD to yield NADP. The sequence is that of NAD kinase from Mycoplasma pneumoniae (strain ATCC 29342 / M129 / Subtype 1) (Mycoplasmoides pneumoniae).